Reading from the N-terminus, the 367-residue chain is MSNLPIYNFIRKLPKCEHHVHLEGCLSPDLVFRLAKKNGITLPSDDAAYTTPSTLLASYEHFGCLDDFLRYYYIAVSVLIEASDFEALAYEYFSIAHSQGVHHAEVFFDPQTHTSRGISYDVVVSGFSAACERANRDFGMSTNLIMCFLRHLPSEAAHETFAEALKRNDFENGIVAGVGLDSSEVDFPPELFQEVYKLAAEKGIRRTGHAGEEGDPSYIRSGLDNLSLQRIDHGIRLVEDKELMKRVAEENIMLTMCPLSNLKLRCVNSIAELPVREFLEAGVPFSINCDDPAYFGGYTLENYFAIQKHFNLTVKEWVFIANAAINGSWISGKRKEELLSSVQKCVKEYTAEIQQPKTLETAVEVQA.

3 residues coordinate Zn(2+): His19, His21, and His209. Glu212 (proton donor) is an active-site residue. Asp290 contributes to the Zn(2+) binding site. Asp291 serves as a coordination point for substrate.

Belongs to the metallo-dependent hydrolases superfamily. Adenosine and AMP deaminases family. Adenine deaminase type 2 subfamily. The cofactor is Zn(2+).

The protein localises to the cytoplasm. It localises to the nucleus. The enzyme catalyses adenine + H2O + H(+) = hypoxanthine + NH4(+). Catalyzes the hydrolytic deamination of adenine to hypoxanthine. Plays an important role in the purine salvage pathway and in nitrogen catabolism. Also exhibits a low activity towards N(6)-substituted adenines that are commonly known as the plant hormones cytokinins. The polypeptide is Adenine deaminase (Schizosaccharomyces pombe (strain 972 / ATCC 24843) (Fission yeast)).